Reading from the N-terminus, the 47-residue chain is Defensin-like protein 1 (47 aa).

Intrachain disulfides connect cysteine 3/cysteine 47, cysteine 14/cysteine 36, cysteine 20/cysteine 41, and cysteine 24/cysteine 43.

It belongs to the DEFL family. Protease inhibitor I18 (RTI/MTI-2) subfamily.

The chain is Defensin-like protein 1 from Sorghum bicolor (Sorghum).